The chain runs to 425 residues: Dihydroorotase (425 aa).

Zn(2+)-binding residues include His-61 and His-63. Substrate-binding positions include 63 to 65 and Asn-95; that span reads HLR. 3 residues coordinate Zn(2+): Asp-153, His-180, and His-233. Asn-279 serves as a coordination point for substrate. Zn(2+) is bound at residue Asp-306. Residue Asp-306 is part of the active site. His-310 contacts substrate.

It belongs to the metallo-dependent hydrolases superfamily. DHOase family. Class I DHOase subfamily. Requires Zn(2+) as cofactor.

The catalysed reaction is (S)-dihydroorotate + H2O = N-carbamoyl-L-aspartate + H(+). The protein operates within pyrimidine metabolism; UMP biosynthesis via de novo pathway; (S)-dihydroorotate from bicarbonate: step 3/3. Catalyzes the reversible cyclization of carbamoyl aspartate to dihydroorotate. The polypeptide is Dihydroorotase (Geobacter sulfurreducens (strain ATCC 51573 / DSM 12127 / PCA)).